We begin with the raw amino-acid sequence, 288 residues long: MSRVANNRDWADDEDLEDSNELPQSTTTTNKDGTQTIVTWRFNDDGKKVKTTRRIRFTKVKEIVNPRVAERKSWGKFGLSQKDAAGPASDTTSVGENIIFRPSTNWRKDAKEEVSDAGAMKNKLKDKQVKCRICSGEHFTAKCPFKGTMAPLGEEGAVDVAAGHADTPEGPGGLGAGKSSYVPPHLRNGGAAGGERMGGGKFERDDLATLRVTNVSEMAEEQELRDMFERFGRVTRVFLAKDRETGLAKGFAFISFQERSDAAKACEKMDGYGFKHLILRVEFAKKAT.

The segment at 1 to 33 (MSRVANNRDWADDEDLEDSNELPQSTTTTNKDG) is disordered. The span at 11–20 (ADDEDLEDSN) shows a compositional bias: acidic residues. Positions 21-33 (ELPQSTTTTNKDG) are enriched in polar residues. One can recognise an RRM domain in the interval 208–286 (ATLRVTNVSE…LILRVEFAKK (79 aa)).

The protein belongs to the eIF-3 subunit G family. As to quaternary structure, component of the eukaryotic translation initiation factor 3 (eIF-3) complex.

The protein resides in the cytoplasm. In terms of biological role, RNA-binding component of the eukaryotic translation initiation factor 3 (eIF-3) complex, which is involved in protein synthesis of a specialized repertoire of mRNAs and, together with other initiation factors, stimulates binding of mRNA and methionyl-tRNAi to the 40S ribosome. The eIF-3 complex specifically targets and initiates translation of a subset of mRNAs involved in cell proliferation. This subunit can bind 18S rRNA. The protein is Eukaryotic translation initiation factor 3 subunit G (tif35) of Sclerotinia sclerotiorum (strain ATCC 18683 / 1980 / Ss-1) (White mold).